We begin with the raw amino-acid sequence, 1297 residues long: Outer capsid protein VP1 (1297 aa).

Belongs to the aquareoviridae outer capsid VP1 protein family.

It localises to the virion. It catalyses the reaction a 5'-end diphospho-ribonucleoside in mRNA + GTP + H(+) = a 5'-end (5'-triphosphoguanosine)-ribonucleoside in mRNA + diphosphate. It carries out the reaction a 5'-end (5'-triphosphoguanosine)-ribonucleoside in mRNA + S-adenosyl-L-methionine = a 5'-end (N(7)-methyl 5'-triphosphoguanosine)-ribonucleoside in mRNA + S-adenosyl-L-homocysteine. Its function is as follows. Outer capsid protein involved in mRNA capping. Catalyzes the last 3 enzymatic activities for formation of the 5' cap structure on the viral plus-strand transcripts, namely the RNA guanylyltransferase, RNA-7N- and RNA-2'O-methyltransferase activities. In Oncorhynchus keta (Chum salmon), this protein is Outer capsid protein VP1 (S1).